The sequence spans 835 residues: MKVLALRRSVAQVYADTQIYTHDETKDDYENAFLISNLTTHNILYLNYSVKTLQILNKSGIAAVEIQKMDELFTLIRCNFTYDYIEDIVYLHDYSYYTNNEIRTDQHWVTKTNIENYLLPGWKLTYVGYNGNDTRGHYNFSFKCQNAATDDDAIIEYIYSNELDFQNFILKKIKERMTTSLPIARLSNRVFRDKLFKTLVSDYSKVVNVGPRNESMFTFLDHPSIKQFSNGPYLVKDTIKLKQERWLGKRLSQFDIGQYKNMLNVLTTLYQYYDMYHEKPIIYMVGSAPSYWIHDVRQYSNLKFETWDPLDTPYSDLHHKELFYISDVTKLKDNSILYVDIRTDRESIDWKTWRKIVEEQTINNLNIAYRYLSTGKAKVCCVKMTAMDLELPISAKLLHHPTTEIRSEFYLIMDIWDSKNIKRFIPKGVLYSYINNIITENVFIQQPFKLKTLRNEYVVALYALSNDFNNREDVIKLVNNQKNALITVRINNTFKDEPKVGFKDIYDWTFLPTDFETNESIITSYDGCLGMFGLSISLASKPTGNNHLFILSGTNKYFKLDQFANHMSISRRSHQIRFSESATSYSGYIFRDLSNNNFNLIGTNVENSVSGHVYNALIYYRYNYSFDLKRWIYLHSTNKASIEGGRYYEHAPIELIYACRSAREFARLQDDLTVLRYSNEIENYINKVYSITYADDPNYFIGIKFKNIPYEYDVKVPHLTFGVLNISDSMVPDVIAILKKFKSELFRMDITTSYTYMLSDEIYVANVSGVLSTYFKLYNAFYKEQITFGQSRMFIPHITLSFSDKKVVRIDSTRLNIDFIYLRKIKGDTVFDMAE.

An N7-methyltransferase activity region spans residues 171–245 (KKIKERMTTS…KDTIKLKQER (75 aa)). Residues 246–428 (WLGKRLSQFD…KNIKRFIPKG (183 aa)) form a 2'-O-methyltransferase activity region. The tract at residues 429-555 (VLYSYINNII…NHLFILSGTN (127 aa)) is N7-methyltransferase activity. Residues 556-692 (KYFKLDQFAN…NYINKVYSIT (137 aa)) are GTase/RTPase activity. Residues 693-835 (YADDPNYFIG…KGDTVFDMAE (143 aa)) are 2'-5'-phosphodiesterase activity. Active-site for 2'-5'-phosphodiesterase activity residues include H718, T720, H797, and T799.

The protein belongs to the rotavirus VP3 family. In terms of assembly, interacts with VP1. Interacts with VP2.

It is found in the virion. The enzyme catalyses a 5'-end diphospho-ribonucleoside in mRNA + GTP + H(+) = a 5'-end (5'-triphosphoguanosine)-ribonucleoside in mRNA + diphosphate. The catalysed reaction is a 5'-end (5'-triphosphoguanosine)-ribonucleoside in mRNA + S-adenosyl-L-methionine = a 5'-end (N(7)-methyl 5'-triphosphoguanosine)-ribonucleoside in mRNA + S-adenosyl-L-homocysteine. It catalyses the reaction 5'-triphosphoadenylyl-(2'-&gt;5')-adenylyl-(2'-&gt;5')-adenosine + 2 H2O = 2 AMP + ATP + 2 H(+). Functionally, multifunctional enzyme involved in mRNA capping. Catalyzes the formation of the 5' cap structure on the viral plus-strand transcripts. Specifically binds to GTP and displays guanylyltransferase and methyltransferase activities. Has affinity for ssRNA but not for dsRNA. Capping activity is non-specific and caps RNAs that initiate with either a G or an A residue. Together with VP1 polymerase, forms a VP1-VP3 complex positioned near the channels situated at each of the five-fold vertices of the core. Following infection, the outermost layer of the virus is lost, leaving a double-layered particle (DLP) made up of the core and VP6 shell. VP1 then catalyzes the transcription of fully conservative plus-strand genomic RNAs that are capped by VP3 and extruded through the DLP's channels into the cytoplasm where they function as mRNAs for translation of viral proteins. DLPs probably have an RNA triphosphatase activity as well, whereas open cores do not. Its function is as follows. Counteracts the host innate immune response thanks to its phosphodiesterase that degrades the 5'-triphosphorylated, 2'-5' linked adenylate oligomers produced by the host cell IFN-inducible 2',5'-oligoadenylate synthetase (OAS). The host RNaseL is therefore not activated. In Homo sapiens (Human), this protein is Protein VP3.